A 127-amino-acid polypeptide reads, in one-letter code: MSTEALLEQIGKLTLVEAADLVKKMEDKFGISAAAPVAVAAVGAAPAGAGAAEEASTFNVILKGFDSAKKIEVIKLVREITGLGLADAKGLVEAGGKAVKEGVAKAEADDLKKKFEGAGAQIELKAS.

This sequence belongs to the bacterial ribosomal protein bL12 family. As to quaternary structure, homodimer. Part of the ribosomal stalk of the 50S ribosomal subunit. Forms a multimeric L10(L12)X complex, where L10 forms an elongated spine to which 2 to 4 L12 dimers bind in a sequential fashion. Binds GTP-bound translation factors.

In terms of biological role, forms part of the ribosomal stalk which helps the ribosome interact with GTP-bound translation factors. Is thus essential for accurate translation. This chain is Large ribosomal subunit protein bL12, found in Leptospira interrogans serogroup Icterohaemorrhagiae serovar copenhageni (strain Fiocruz L1-130).